The primary structure comprises 89 residues: Small ribosomal subunit protein uS15 (89 aa).

This sequence belongs to the universal ribosomal protein uS15 family. As to quaternary structure, part of the 30S ribosomal subunit. Forms a bridge to the 50S subunit in the 70S ribosome, contacting the 23S rRNA.

Functionally, one of the primary rRNA binding proteins, it binds directly to 16S rRNA where it helps nucleate assembly of the platform of the 30S subunit by binding and bridging several RNA helices of the 16S rRNA. In terms of biological role, forms an intersubunit bridge (bridge B4) with the 23S rRNA of the 50S subunit in the ribosome. The polypeptide is Small ribosomal subunit protein uS15 (Parafrankia sp. (strain EAN1pec)).